A 54-amino-acid polypeptide reads, in one-letter code: Large ribosomal subunit protein bL32c (54 aa).

Positions M1–W20 are disordered.

It belongs to the bacterial ribosomal protein bL32 family.

It is found in the plastid. The protein localises to the chloroplast. In Euglena gracilis, this protein is Large ribosomal subunit protein bL32c (rpl32).